We begin with the raw amino-acid sequence, 582 residues long: Potassium-transporting ATPase potassium-binding subunit (582 aa).

Helical transmembrane passes span 6–26, 65–85, 87–107, 136–156, 178–198, 277–297, 304–324, 402–422, 441–461, 505–525, and 546–566; these read LVQLLFFLSVLLVLSWPLGLY, IYALVMLGLNAFGMVFVYVLE, LQGGLPLNPLHLPGVDPFVAV, GLAVQNFLSAATGMAVAVALI, VLYILLPLSFVLALLLVWQGV, LEMLAILLIPAALCHTFGVMI, LAILAAMTILFAGFAALTLAA, GLYGMLVFAVVTVFVAGLMVG, ALVILIPPFLCLAGTALAAVI, IAGAVAMFVSRYWLIVPVLAL, and GGIFVALLIIVVLVVGALTFV.

Belongs to the KdpA family. In terms of assembly, the system is composed of three essential subunits: KdpA, KdpB and KdpC.

The protein localises to the cell inner membrane. In terms of biological role, part of the high-affinity ATP-driven potassium transport (or Kdp) system, which catalyzes the hydrolysis of ATP coupled with the electrogenic transport of potassium into the cytoplasm. This subunit binds the periplasmic potassium ions and delivers the ions to the membrane domain of KdpB through an intramembrane tunnel. The protein is Potassium-transporting ATPase potassium-binding subunit of Solidesulfovibrio magneticus (strain ATCC 700980 / DSM 13731 / RS-1) (Desulfovibrio magneticus).